The sequence spans 387 residues: Cysteine desulfurase IscS (387 aa).

Residues 73 to 74 (AT), Asn155, Gln183, and 203 to 205 (SAH) contribute to the pyridoxal 5'-phosphate site. Lys206 is modified (N6-(pyridoxal phosphate)lysine). Position 241 (Thr241) interacts with pyridoxal 5'-phosphate. Cys328 (cysteine persulfide intermediate) is an active-site residue. Residue Cys328 participates in [2Fe-2S] cluster binding.

Belongs to the class-V pyridoxal-phosphate-dependent aminotransferase family. NifS/IscS subfamily. Homodimer. Forms a heterotetramer with IscU, interacts with other sulfur acceptors. The cofactor is pyridoxal 5'-phosphate.

The protein resides in the cytoplasm. It catalyses the reaction (sulfur carrier)-H + L-cysteine = (sulfur carrier)-SH + L-alanine. It functions in the pathway cofactor biosynthesis; iron-sulfur cluster biosynthesis. Its function is as follows. Master enzyme that delivers sulfur to a number of partners involved in Fe-S cluster assembly, tRNA modification or cofactor biosynthesis. Catalyzes the removal of elemental sulfur atoms from cysteine to produce alanine. Functions as a sulfur delivery protein for Fe-S cluster synthesis onto IscU, an Fe-S scaffold assembly protein, as well as other S acceptor proteins. The protein is Cysteine desulfurase IscS of Helicobacter pylori (strain Shi470).